Consider the following 390-residue polypeptide: tRNA(Met) cytidine acetate ligase (390 aa).

Residues 7 to 20 (VVEY…HKLH), Gly101, Asn162, and Arg187 contribute to the ATP site.

This sequence belongs to the TmcAL family.

The protein localises to the cytoplasm. The catalysed reaction is cytidine(34) in elongator tRNA(Met) + acetate + ATP = N(4)-acetylcytidine(34) in elongator tRNA(Met) + AMP + diphosphate. Catalyzes the formation of N(4)-acetylcytidine (ac(4)C) at the wobble position of elongator tRNA(Met), using acetate and ATP as substrates. First activates an acetate ion to form acetyladenylate (Ac-AMP) and then transfers the acetyl group to tRNA to form ac(4)C34. The chain is tRNA(Met) cytidine acetate ligase from Listeria monocytogenes serotype 4a (strain HCC23).